The chain runs to 184 residues: Non-fimbrial adhesin 1 (184 aa).

Positions 1–28 (MKAKKYENQIYNENGRRCQRHGRRLAIA) are cleaved as a signal peptide. Cysteines 57 and 91 form a disulfide.

Forms a polymeric structure, which disintegrates with elevated temperature into a monomer but with some relatively stable dimers.

This is Non-fimbrial adhesin 1 (nfaA) from Escherichia coli.